We begin with the raw amino-acid sequence, 208 residues long: MGRVIRDFFTQPTLVVAESLLGKILVHKPRKGFCYKGMIVETEAYLGNGDDACHASRKMTPRNSVMFRNPGTIYVYFTYGAHNLLNIVTEPEGTAGAVLIRAMEPVEGIELMKKNRKTDKVINLMNGPGKLTQAMEISLQQNGSSLHDTTLYLEEGTTIAGSCIETTPRVGISKSTDLLWRKYISDNPYVSKASPLPPTKKKRIVLES.

Belongs to the DNA glycosylase MPG family.

The sequence is that of Putative 3-methyladenine DNA glycosylase from Prosthecochloris aestuarii (strain DSM 271 / SK 413).